Reading from the N-terminus, the 263-residue chain is 4-hydroxy-tetrahydrodipicolinate reductase (263 aa).

10 to 15 (GASGKM) is an NAD(+) binding site. Arg38 contributes to the NADP(+) binding site. Residues 97–99 (GTT) and 123–126 (APNF) each bind NAD(+). His153 acts as the Proton donor/acceptor in catalysis. His154 serves as a coordination point for (S)-2,3,4,5-tetrahydrodipicolinate. The active-site Proton donor is Lys157. 163–164 (GT) is a (S)-2,3,4,5-tetrahydrodipicolinate binding site.

This sequence belongs to the DapB family.

It is found in the cytoplasm. It catalyses the reaction (S)-2,3,4,5-tetrahydrodipicolinate + NAD(+) + H2O = (2S,4S)-4-hydroxy-2,3,4,5-tetrahydrodipicolinate + NADH + H(+). It carries out the reaction (S)-2,3,4,5-tetrahydrodipicolinate + NADP(+) + H2O = (2S,4S)-4-hydroxy-2,3,4,5-tetrahydrodipicolinate + NADPH + H(+). It participates in amino-acid biosynthesis; L-lysine biosynthesis via DAP pathway; (S)-tetrahydrodipicolinate from L-aspartate: step 4/4. Catalyzes the conversion of 4-hydroxy-tetrahydrodipicolinate (HTPA) to tetrahydrodipicolinate. In Dehalococcoides mccartyi (strain CBDB1), this protein is 4-hydroxy-tetrahydrodipicolinate reductase.